We begin with the raw amino-acid sequence, 476 residues long: Stromelysin-2 (476 aa).

The N-terminal stretch at 1-17 is a signal peptide; that stretch reads MEPLAILVLLCFPICSA. The propeptide at 18-99 is activation peptide; it reads YPLHGAVRQD…PRCGVPDVGG (82 aa). The Cysteine switch motif lies at 90–97; that stretch reads PRCGVPDV. The Zn(2+) site is built by cysteine 92, histidine 168, aspartate 170, histidine 183, histidine 196, and histidine 218. Residue glutamate 219 is part of the active site. Zn(2+)-binding residues include histidine 222 and histidine 228. 4 Hemopexin repeats span residues 286–335, 336–382, 384–432, and 433–476; these read PVKC…WPSL, PSGL…GFPP, VKKI…FPGI, and EPQV…WLLC. A disulfide bridge links cysteine 289 with cysteine 476.

This sequence belongs to the peptidase M10A family. The cofactor is Zn(2+). It depends on Ca(2+) as a cofactor.

Its subcellular location is the secreted. The protein localises to the extracellular space. It localises to the extracellular matrix. It carries out the reaction Similar to stromelysin 1, but action on collagen types III, IV and V is weak.. Its function is as follows. Can degrade fibronectin, gelatins of type I, III, IV, and V; weakly collagens III, IV, and V. Activates procollagenase. The chain is Stromelysin-2 (Mmp10) from Rattus norvegicus (Rat).